Here is a 398-residue protein sequence, read N- to C-terminus: Cysteine protease ATG4A (398 aa).

Catalysis depends on C77, which acts as the Nucleophile. Active-site residues include D279 and H281. An LIR motif is present at residues 393–396; sequence FEIL.

The protein belongs to the peptidase C54 family. In terms of assembly, interacts with ATG9A; the interaction is direct.

The protein localises to the cytoplasm. It carries out the reaction [protein]-C-terminal L-amino acid-glycyl-phosphatidylethanolamide + H2O = [protein]-C-terminal L-amino acid-glycine + a 1,2-diacyl-sn-glycero-3-phosphoethanolamine. Inhibited by N-ethylmaleimide. Redox-regulated during autophagy since reducing conditions activate ATG4A whereas an oxidizing environment such as the presence of H(2)O(2) inhibits its activity. In terms of biological role, cysteine protease that plays a key role in autophagy by mediating both proteolytic activation and delipidation of ATG8 family proteins. The protease activity is required for proteolytic activation of ATG8 family proteins: cleaves the C-terminal amino acid of ATG8 proteins to reveal a C-terminal glycine. Exposure of the glycine at the C-terminus is essential for ATG8 proteins conjugation to phosphatidylethanolamine (PE) and insertion to membranes, which is necessary for autophagy. Preferred substrate is GABARAPL2 followed by MAP1LC3A and GABARAP. Protease activity is also required to counteract formation of high-molecular weight conjugates of ATG8 proteins (ATG8ylation): acts as a deubiquitinating-like enzyme that removes ATG8 conjugated to other proteins, such as ATG3. In addition to the protease activity, also mediates delipidation of ATG8 family proteins. Catalyzes delipidation of PE-conjugated forms of ATG8 proteins during macroautophagy. Compared to ATG4B, the major protein for proteolytic activation of ATG8 proteins, shows weaker ability to cleave the C-terminal amino acid of ATG8 proteins, while it displays stronger delipidation activity. Involved in phagophore growth during mitophagy independently of its protease activity and of ATG8 proteins: acts by regulating ATG9A trafficking to mitochondria and promoting phagophore-endoplasmic reticulum contacts during the lipid transfer phase of mitophagy. The protein is Cysteine protease ATG4A of Pongo abelii (Sumatran orangutan).